Consider the following 186-residue polypeptide: Guanylate kinase (186 aa).

Residues 4-182 (GKLIVLTGPS…TLQNLDKILF (179 aa)) enclose the Guanylate kinase-like domain. 11–18 (GPSGVGKG) is an ATP binding site.

It belongs to the guanylate kinase family.

It is found in the cytoplasm. It catalyses the reaction GMP + ATP = GDP + ADP. Functionally, essential for recycling GMP and indirectly, cGMP. The protein is Guanylate kinase of Trichodesmium erythraeum (strain IMS101).